Consider the following 197-residue polypeptide: Recombination protein RecR (197 aa).

The C4-type zinc finger occupies 55–70 (CVQCRDFTESEICTIC). Residues 78 to 173 (QQLCVVESPA…RPSRLAQGMP (96 aa)) enclose the Toprim domain.

The protein belongs to the RecR family.

Its function is as follows. May play a role in DNA repair. It seems to be involved in an RecBC-independent recombinational process of DNA repair. It may act with RecF and RecO. This chain is Recombination protein RecR, found in Xanthomonas axonopodis pv. citri (strain 306).